Reading from the N-terminus, the 270-residue chain is Formamidopyrimidine-DNA glycosylase (270 aa).

Pro2 (schiff-base intermediate with DNA) is an active-site residue. Glu3 acts as the Proton donor in catalysis. Lys58 (proton donor; for beta-elimination activity) is an active-site residue. His91, Arg109, and Arg151 together coordinate DNA. The FPG-type zinc finger occupies 236-270 (LVYGRGGEACKTCQKPLKEIRMNDRTTVYCVTCQQ). Arg260 serves as the catalytic Proton donor; for delta-elimination activity.

The protein belongs to the FPG family. Monomer. Zn(2+) is required as a cofactor.

It catalyses the reaction Hydrolysis of DNA containing ring-opened 7-methylguanine residues, releasing 2,6-diamino-4-hydroxy-5-(N-methyl)formamidopyrimidine.. It carries out the reaction 2'-deoxyribonucleotide-(2'-deoxyribose 5'-phosphate)-2'-deoxyribonucleotide-DNA = a 3'-end 2'-deoxyribonucleotide-(2,3-dehydro-2,3-deoxyribose 5'-phosphate)-DNA + a 5'-end 5'-phospho-2'-deoxyribonucleoside-DNA + H(+). Involved in base excision repair of DNA damaged by oxidation or by mutagenic agents. Acts as a DNA glycosylase that recognizes and removes damaged bases. Has a preference for oxidized purines, such as 7,8-dihydro-8-oxoguanine (8-oxoG). Has AP (apurinic/apyrimidinic) lyase activity and introduces nicks in the DNA strand. Cleaves the DNA backbone by beta-delta elimination to generate a single-strand break at the site of the removed base with both 3'- and 5'-phosphates. This is Formamidopyrimidine-DNA glycosylase from Cellvibrio japonicus (strain Ueda107) (Pseudomonas fluorescens subsp. cellulosa).